We begin with the raw amino-acid sequence, 421 residues long: MEKMHITNQEHDAFVKSHPNGDLLQLTKWAETKKLTGWYARRIAVGRDGEVQGVAQLLFKKVPKLPYTLCYISRGFVVDYSNKEALNALLDSAKEIAKAEKAYAIKIDPDVEVDKGTDALQNLKALGFKHKGFKEGLSKDYIQPRMTMITPIDKNDDELLNSFERRNRSKVRLALKRGTTVERSDREGLKTFAELMKITGERDGFLTRDISYFENIYDALHEDGDAELFLVKLDPKENIAKVNQELNELHAEIAKWQQKMKTSEKQAKKAQNMINDAQNKIAKNEDLKRDLEALEKEHPEGIYLSGALLMFAGSKSYYLYGASSNEFRDFLPNHHMQYTMMKYAREHGATTYDFGGTDNDPDKDSEHYGLWAFKKVWGTYLSEKIGEFDYVLNQPLYQLIEQVKPRLTKAKIKISRKLKRK.

It belongs to the FemABX family. In terms of assembly, monomer.

It localises to the cytoplasm. It carries out the reaction beta-D-GlcNAc-(1-&gt;4)-Mur2Ac(oyl-L-Ala-D-isoglutaminyl-L-Lys-D-Ala-D-Ala)-di-trans,octa-cis-undecaprenyl diphosphate + glycyl-tRNA(Gly) = beta-D-GlcNAc-(1-&gt;4)-Mur2Ac(oyl-L-Ala-D-isoglutaminyl-L-Lys-(N(6)-Gly)-D-Ala-D-Ala)-di-trans,octa-cis-undecaprenyl diphosphate + tRNA(Gly) + H(+). Functionally, catalyzes the incorporation of the first glycine of the pentaglycine interpeptide bridge, which is characteristic of the S.aureus peptidoglycan. This glycine is added to the epsilon-amino group of the L-lysine of the membrane-bound lipid II intermediate (GlcNAc-(beta-1,4)-N-acetylmuramic acid(-L-Ala-D-iGln-L-Lys-D-Ala-D-Ala)-pyrophosphoryl-undecaprenol), using glycyl-tRNA(Gly) as donor, in a ribosome-independent mechanism. Involved in methicillin resistance. This chain is Lipid II:glycine glycyltransferase (femX), found in Staphylococcus aureus (strain USA300).